Here is a 355-residue protein sequence, read N- to C-terminus: UDP-N-acetylglucosamine--N-acetylmuramyl-(pentapeptide) pyrophosphoryl-undecaprenol N-acetylglucosamine transferase (355 aa).

Residues 15-17 (TGG), asparagine 127, arginine 163, serine 191, isoleucine 244, 263-268 (ALTVSE), and glutamine 288 contribute to the UDP-N-acetyl-alpha-D-glucosamine site.

Belongs to the glycosyltransferase 28 family. MurG subfamily.

Its subcellular location is the cell inner membrane. It catalyses the reaction di-trans,octa-cis-undecaprenyl diphospho-N-acetyl-alpha-D-muramoyl-L-alanyl-D-glutamyl-meso-2,6-diaminopimeloyl-D-alanyl-D-alanine + UDP-N-acetyl-alpha-D-glucosamine = di-trans,octa-cis-undecaprenyl diphospho-[N-acetyl-alpha-D-glucosaminyl-(1-&gt;4)]-N-acetyl-alpha-D-muramoyl-L-alanyl-D-glutamyl-meso-2,6-diaminopimeloyl-D-alanyl-D-alanine + UDP + H(+). The protein operates within cell wall biogenesis; peptidoglycan biosynthesis. In terms of biological role, cell wall formation. Catalyzes the transfer of a GlcNAc subunit on undecaprenyl-pyrophosphoryl-MurNAc-pentapeptide (lipid intermediate I) to form undecaprenyl-pyrophosphoryl-MurNAc-(pentapeptide)GlcNAc (lipid intermediate II). In Citrobacter koseri (strain ATCC BAA-895 / CDC 4225-83 / SGSC4696), this protein is UDP-N-acetylglucosamine--N-acetylmuramyl-(pentapeptide) pyrophosphoryl-undecaprenol N-acetylglucosamine transferase.